Here is an 828-residue protein sequence, read N- to C-terminus: DNA gyrase subunit A (828 aa).

Residues 32–497 (LPDVRDGLKP…EVLSLEDEDL (466 aa)) form the Topo IIA-type catalytic domain. The O-(5'-phospho-DNA)-tyrosine intermediate role is filled by tyrosine 120. The GyrA-box motif lies at 524-530 (QKRGGRG).

Belongs to the type II topoisomerase GyrA/ParC subunit family. As to quaternary structure, heterotetramer, composed of two GyrA and two GyrB chains. In the heterotetramer, GyrA contains the active site tyrosine that forms a transient covalent intermediate with DNA, while GyrB binds cofactors and catalyzes ATP hydrolysis.

The protein resides in the cytoplasm. It carries out the reaction ATP-dependent breakage, passage and rejoining of double-stranded DNA.. Its function is as follows. A type II topoisomerase that negatively supercoils closed circular double-stranded (ds) DNA in an ATP-dependent manner to modulate DNA topology and maintain chromosomes in an underwound state. Negative supercoiling favors strand separation, and DNA replication, transcription, recombination and repair, all of which involve strand separation. Also able to catalyze the interconversion of other topological isomers of dsDNA rings, including catenanes and knotted rings. Type II topoisomerases break and join 2 DNA strands simultaneously in an ATP-dependent manner. This Streptococcus pyogenes serotype M1 protein is DNA gyrase subunit A.